Reading from the N-terminus, the 88-residue chain is Large ribosomal subunit protein eL31 (88 aa).

This sequence belongs to the eukaryotic ribosomal protein eL31 family.

This is Large ribosomal subunit protein eL31 (rpl31e) from Sulfurisphaera tokodaii (strain DSM 16993 / JCM 10545 / NBRC 100140 / 7) (Sulfolobus tokodaii).